The primary structure comprises 111 residues: Large ribosomal subunit protein uL23 (111 aa).

The protein belongs to the universal ribosomal protein uL23 family. In terms of assembly, part of the 50S ribosomal subunit. Contacts protein L29, and trigger factor when it is bound to the ribosome.

One of the early assembly proteins it binds 23S rRNA. One of the proteins that surrounds the polypeptide exit tunnel on the outside of the ribosome. Forms the main docking site for trigger factor binding to the ribosome. The sequence is that of Large ribosomal subunit protein uL23 from Chlamydia muridarum (strain MoPn / Nigg).